Reading from the N-terminus, the 156-residue chain is 6,7-dimethyl-8-ribityllumazine synthase (156 aa).

5-amino-6-(D-ribitylamino)uracil contacts are provided by residues phenylalanine 25, 59 to 61, and 83 to 85; these read AWE and AVI. 88 to 89 provides a ligand contact to (2S)-2-hydroxy-3-oxobutyl phosphate; the sequence is ST. The active-site Proton donor is the histidine 91. Asparagine 116 contacts 5-amino-6-(D-ribitylamino)uracil. Arginine 130 lines the (2S)-2-hydroxy-3-oxobutyl phosphate pocket.

It belongs to the DMRL synthase family. As to quaternary structure, forms an icosahedral capsid composed of 60 subunits, arranged as a dodecamer of pentamers.

It carries out the reaction (2S)-2-hydroxy-3-oxobutyl phosphate + 5-amino-6-(D-ribitylamino)uracil = 6,7-dimethyl-8-(1-D-ribityl)lumazine + phosphate + 2 H2O + H(+). Its pathway is cofactor biosynthesis; riboflavin biosynthesis; riboflavin from 2-hydroxy-3-oxobutyl phosphate and 5-amino-6-(D-ribitylamino)uracil: step 1/2. Catalyzes the formation of 6,7-dimethyl-8-ribityllumazine by condensation of 5-amino-6-(D-ribitylamino)uracil with 3,4-dihydroxy-2-butanone 4-phosphate. This is the penultimate step in the biosynthesis of riboflavin. This is 6,7-dimethyl-8-ribityllumazine synthase from Acinetobacter baylyi (strain ATCC 33305 / BD413 / ADP1).